The primary structure comprises 147 residues: MYPAHLLVLSAVCVSLLGAANIPPHPLNLINFMEMIRYTIPCEKTWGEYTNYGCYCGAGGSGRPIDALDRCCYVHDNCYGDAANIRDCNPKTQSYSYKLTKRTIICYGAAGTCARVVCDCDRTAALCFGDSEYIEGHKNIDTARFCQ.

The first 19 residues, 1-19, serve as a signal peptide directing secretion; sequence MYPAHLLVLSAVCVSLLGA. Positions 20-27 are excised as a propeptide; the sequence is ANIPPHPL. Cystine bridges form between C54-C146, C56-C72, C71-C127, C78-C120, C88-C113, and C106-C118. Residues Y55, G57, and G59 each coordinate Ca(2+). H75 is an active-site residue. D76 is a Ca(2+) binding site. The active site involves D121.

Belongs to the phospholipase A2 family. Group I subfamily. D49 sub-subfamily. As to quaternary structure, heterodimer; disulfide-linked. The A chains have phospholipase A2 activity and the B chains show homology with the basic protease inhibitors. The A3 chain is found in beta-5 bungarotoxins. Requires Ca(2+) as cofactor. As to expression, expressed by the venom gland.

It localises to the secreted. The enzyme catalyses a 1,2-diacyl-sn-glycero-3-phosphocholine + H2O = a 1-acyl-sn-glycero-3-phosphocholine + a fatty acid + H(+). Its function is as follows. Snake venom phospholipase A2 (PLA2) that inhibits neuromuscular transmission by blocking acetylcholine release from the nerve termini. PLA2 catalyzes the calcium-dependent hydrolysis of the 2-acyl groups in 3-sn-phosphoglycerides. The protein is Acidic phospholipase A2 beta-bungarotoxin A3 chain of Bungarus multicinctus (Many-banded krait).